The chain runs to 192 residues: Putative 3-methyladenine DNA glycosylase (192 aa).

It belongs to the DNA glycosylase MPG family.

The sequence is that of Putative 3-methyladenine DNA glycosylase from Methanoculleus marisnigri (strain ATCC 35101 / DSM 1498 / JR1).